We begin with the raw amino-acid sequence, 445 residues long: Ubiquitin carboxyl-terminal hydrolase MINDY-3 (445 aa).

C51 serves as the catalytic Nucleophile. Residue S125 is modified to Phosphoserine. The active-site Proton acceptor is the H287.

It belongs to the MINDY deubiquitinase family. FAM188 subfamily. In terms of assembly, interacts with COPS5. As to expression, widely expressed with high levels in heart, skeletal muscle, and kidney, and low levels in liver and brain. Also expressed in lung (at protein level).

Its subcellular location is the nucleus. The catalysed reaction is Thiol-dependent hydrolysis of ester, thioester, amide, peptide and isopeptide bonds formed by the C-terminal Gly of ubiquitin (a 76-residue protein attached to proteins as an intracellular targeting signal).. In terms of biological role, hydrolase that can remove 'Lys-48'-linked conjugated ubiquitin from proteins. This Homo sapiens (Human) protein is Ubiquitin carboxyl-terminal hydrolase MINDY-3.